Consider the following 163-residue polypeptide: Transcription antitermination protein NusB (163 aa).

Belongs to the NusB family.

Functionally, involved in transcription antitermination. Required for transcription of ribosomal RNA (rRNA) genes. Binds specifically to the boxA antiterminator sequence of the ribosomal RNA (rrn) operons. This is Transcription antitermination protein NusB from Mycolicibacterium vanbaalenii (strain DSM 7251 / JCM 13017 / BCRC 16820 / KCTC 9966 / NRRL B-24157 / PYR-1) (Mycobacterium vanbaalenii).